We begin with the raw amino-acid sequence, 320 residues long: Cytochrome f (320 aa).

Residues 1-35 (MQTRNNFSWIKEQITRSISVSLMIYIITRASISNA) form the signal peptide. Heme contacts are provided by Y36, C56, C59, and H60. The helical transmembrane segment at 286–306 (VQGLLFFLASVILAQIFLVLK) threads the bilayer.

It belongs to the cytochrome f family. The 4 large subunits of the cytochrome b6-f complex are cytochrome b6, subunit IV (17 kDa polypeptide, petD), cytochrome f and the Rieske protein, while the 4 small subunits are PetG, PetL, PetM and PetN. The complex functions as a dimer. Requires heme as cofactor.

It localises to the plastid. The protein resides in the chloroplast thylakoid membrane. Functionally, component of the cytochrome b6-f complex, which mediates electron transfer between photosystem II (PSII) and photosystem I (PSI), cyclic electron flow around PSI, and state transitions. The polypeptide is Cytochrome f (Lactuca sativa (Garden lettuce)).